The sequence spans 343 residues: Ribosomal RNA small subunit methyltransferase C (343 aa).

Belongs to the methyltransferase superfamily. RsmC family. In terms of assembly, monomer.

It localises to the cytoplasm. It carries out the reaction guanosine(1207) in 16S rRNA + S-adenosyl-L-methionine = N(2)-methylguanosine(1207) in 16S rRNA + S-adenosyl-L-homocysteine + H(+). In terms of biological role, specifically methylates the guanine in position 1207 of 16S rRNA in the 30S particle. In Shigella sonnei (strain Ss046), this protein is Ribosomal RNA small subunit methyltransferase C.